The sequence spans 297 residues: GATA transcription factor 24 (297 aa).

A Tify domain is found at 73-108 (GIENGDQLTLSFQGQVYVFDRVSPEKVQAVLLLLGG). The 43-residue stretch at 143–185 (RLASLLRFREKRKGRNFDKTIRYTVRKEVALRMQRKKGQFTSA) folds into the CCT domain. Residues 178–203 (KKGQFTSAKSSNDDSGSTGSDWGSNQ) are disordered. Over residues 190-201 (DDSGSTGSDWGS) the composition is skewed to low complexity. The GATA-type zinc finger occupies 213–269 (QKPEVLCRHCGTSEKSTPMMRRGPDGPRTLCNACGLMWANKGTLRDLSKVPPPQTPQ).

It belongs to the type IV zinc-finger family. Class C subfamily. Predominantly expressed in shoot apices, inflorescences and roots.

The protein localises to the nucleus. Transcriptional activator that specifically binds 5'-GATA-3' or 5'-GAT-3' motifs within gene promoters. The protein is GATA transcription factor 24 (GATA24) of Arabidopsis thaliana (Mouse-ear cress).